A 415-amino-acid chain; its full sequence is Plant UBX domain-containing protein 16 (415 aa).

In terms of domain architecture, UBA spans 19-69; the sequence is QLDEEIVLFRQDQLISSFLEIAVDQTAETARILLQTTDWNIDQAVNLFLTN. The region spanning 333 to 413 is the UBX domain; the sequence is DRSVVCSLCV…GLANSLISVT (81 aa).

The polypeptide is Plant UBX domain-containing protein 16 (Arabidopsis thaliana (Mouse-ear cress)).